Reading from the N-terminus, the 452-residue chain is 1,4-beta-D-glucan cellobiohydrolase A (452 aa).

Positions 1–17 are cleaved as a signal peptide; the sequence is MHQRALLFSALLTAVRA. N-linked (GlcNAc...) asparagine glycosylation occurs at N62. E227 serves as the catalytic Nucleophile. The active-site Proton donor is the E232. 4 N-linked (GlcNAc...) asparagine glycosylation sites follow: N285, N335, N402, and N445.

This sequence belongs to the glycosyl hydrolase 7 (cellulase C) family.

It localises to the secreted. The catalysed reaction is Hydrolysis of (1-&gt;4)-beta-D-glucosidic linkages in cellulose and cellotetraose, releasing cellobiose from the non-reducing ends of the chains.. The biological conversion of cellulose to glucose generally requires three types of hydrolytic enzymes: (1) Endoglucanases which cut internal beta-1,4-glucosidic bonds; (2) Exocellobiohydrolases that cut the disaccharide cellobiose from the non-reducing end of the cellulose polymer chain; (3) Beta-1,4-glucosidases which hydrolyze the cellobiose and other short cello-oligosaccharides to glucose. The chain is 1,4-beta-D-glucan cellobiohydrolase A (cbhA) from Aspergillus niger.